Consider the following 95-residue polypeptide: Aspartyl/glutamyl-tRNA(Asn/Gln) amidotransferase subunit C (95 aa).

Belongs to the GatC family. As to quaternary structure, heterotrimer of A, B and C subunits.

The catalysed reaction is L-glutamyl-tRNA(Gln) + L-glutamine + ATP + H2O = L-glutaminyl-tRNA(Gln) + L-glutamate + ADP + phosphate + H(+). It carries out the reaction L-aspartyl-tRNA(Asn) + L-glutamine + ATP + H2O = L-asparaginyl-tRNA(Asn) + L-glutamate + ADP + phosphate + 2 H(+). Allows the formation of correctly charged Asn-tRNA(Asn) or Gln-tRNA(Gln) through the transamidation of misacylated Asp-tRNA(Asn) or Glu-tRNA(Gln) in organisms which lack either or both of asparaginyl-tRNA or glutaminyl-tRNA synthetases. The reaction takes place in the presence of glutamine and ATP through an activated phospho-Asp-tRNA(Asn) or phospho-Glu-tRNA(Gln). The sequence is that of Aspartyl/glutamyl-tRNA(Asn/Gln) amidotransferase subunit C from Chlorobaculum parvum (strain DSM 263 / NCIMB 8327) (Chlorobium vibrioforme subsp. thiosulfatophilum).